The following is a 154-amino-acid chain: UPF0178 protein BAV3236 (154 aa).

It belongs to the UPF0178 family.

The sequence is that of UPF0178 protein BAV3236 from Bordetella avium (strain 197N).